A 352-amino-acid polypeptide reads, in one-letter code: Glycerol-3-phosphate dehydrogenase 1-like protein (352 aa).

13-18 contributes to the NAD(+) binding site; it reads GSGNWG. Lys123 is a substrate binding site. Ala156 is a binding site for NAD(+). Lys207 acts as the Proton acceptor in catalysis. The NAD(+) site is built by Arg272, Lys299, and Gln301. 272 to 273 provides a ligand contact to substrate; it reads RN.

This sequence belongs to the NAD-dependent glycerol-3-phosphate dehydrogenase family.

The protein localises to the cytoplasm. The enzyme catalyses sn-glycerol 3-phosphate + NAD(+) = dihydroxyacetone phosphate + NADH + H(+). Plays a role in regulating cardiac sodium current. This Xenopus tropicalis (Western clawed frog) protein is Glycerol-3-phosphate dehydrogenase 1-like protein (gpd1l).